The following is a 1530-amino-acid chain: MSHSHPAGLLAAYNSLMDKHLAGYFNNTRIRRHLLRSGLITRSGRILSEKEYKLNMMKRDHQKYIRECLAQAIFHKVLDMERYHQLEIKKKLETLARKERIQRFKGEHTRRSVENNMPILSPHPPVGPKSNRGHSVLVDEGHSSPLALTAPRPYTAPGNMQPPIRLQPLPSNPAVETVPKVTSRSRSKTSLLENEALFPIGGKKAVMKFRNSIGNSQRMNSYQLPNINSYMMPIPPPLPPTGKITRENRSETWRRRRFRPTTAPNGLEPLLTKDSRRIHKTSLHSNAAITMIYLGKNVHLSSDNPDFRDEIKVYQQHCGGENLCVYKGKLLEKETFQFISKRHHGFPFSLTFFLNGMQVNRLSSCCEYKHRKGSRLGGKRGYFGFVCVERSSPCYKCIIAMGLDKKPSLPKSRKEKSTEKGEELKKAEGKVRKEREYVIPKRNEIKENKTSVSAKFSAQEIKTGLKEVVTAVEEMTSKGKPGQEVLEDDQENTLKYEYEEDFEVDEEKQGEKSNEEGQADVQMNGIPQSPLDDKKDNLDPEKESETSSQKAPDARDNVKDENDGCSESELEEDKQDMKTASSTSSRSHPYSSDSEDESAVGDREAHTDSSTDESARRSSSQELSENDKPRKSHLPIEESLEIEIEDQEITKADVETKPMPIDESFENVLKEGTEKGTQEIAEGLSEKSGKHVSAEEKEKDKSKLWEESTAQVKDKKAGLPGLEEGGKDSLPLAYVLALGAPTMNFMVDETAAINSNKESQQLVQKTYTLEKKEAMEEDEAPQHRDADIVQGKGEAALWGEAGAVHEAPLRAWKPTAEQPELAEEFTEKREIPPGIERGAEGAAEAEGVRRLGEGGSDPIGQAAAKDAVGLSKDEAPEKQALMLTVLETDKAASEGEQGLEKAVLANEAAALNLEHLHEVAALREAATSEEGEAEGGVAVSDVGESEEEASIDLEDTGPMEDTASKREDGSEEAILGGEEPAKERKEVMRTETRLSPFTGEAEASRMQVSEGSPEEGSLAKEAFLCKEDVEGEEMVTEAEANREDDRKEILPKELDLARERRKAERPKTSLRKTDSEREEVTRANALKDEDAFKEEQKLKAEEGETETEVRAEEETKAPPNEMGSDAENEAPVEASELSDNPGLLGEDSLKETVVPIFEATPGFEKSLENITALRKEGGGERLSEARDTEHKDREELSSRENRALKEGHRQDGEGALAAPEAEPAGKVQAPEGLIPATGQAEELAAKDHDSCAGLEGRAEGQGGVDVVLRTQEAVAEEDPIMAEKFREEAVDEDPEEEEDKECTLETEAMQDRNSEGDGDMEGEGNTQKNEGMGGGRVVAVEVLHGGGETAETAAEEREVLAGSETAEEKTIANKASSFSDVAEEETWHQQDELVGKTAAAGKVVVEELARSGEEVPAAEEMTVTYTTEAGVGTPGALERKTSGLGQEQEEGSEGQEAATGSGDGRQETGAAEKFRLGLSREGERELSPESLQAMATLPVKPDFTETREKQQHMVQGESETADVSPNNVQV.

9 disordered regions span residues 165-187 (RLQP…RSRS), 408-429 (SLPK…KAEG), 475-661 (MTSK…PMPI), 673-724 (TEKG…GLEE), 773-870 (EAME…AVGL), 923-1146 (REAA…LLGE), 1167-1334 (LENI…GMGG), 1360-1383 (LAGS…DVAE), and 1425-1530 (YTTE…NVQV). Basic and acidic residues-rich tracts occupy residues 415 to 429 (EKST…KAEG), 531 to 545 (LDDK…KESE), and 552 to 562 (PDARDNVKDEN). A compositionally biased stretch (acidic residues) spans 563 to 574 (DGCSESELEEDK). Low complexity predominate over residues 581–592 (SSTSSRSHPYSS). Residues 600–616 (VGDREAHTDSSTDESAR) show a composition bias toward basic and acidic residues. A compositionally biased stretch (acidic residues) spans 638-647 (ESLEIEIEDQ). Basic and acidic residues-rich tracts occupy residues 684-717 (LSEK…DKKA) and 773-787 (EAME…RDAD). The segment covering 834–845 (GIERGAEGAAEA) has biased composition (low complexity). Positions 943 to 958 (GESEEEASIDLEDTGP) are enriched in acidic residues. Basic and acidic residues-rich tracts occupy residues 979–992 (EPAK…RTET), 1039–1116 (EANR…EETK), and 1173–1212 (LRKE…RQDG). Positions 1213 to 1225 (EGALAAPEAEPAG) are enriched in low complexity. Positions 1289-1300 (AVDEDPEEEEDK) are enriched in acidic residues. 2 stretches are compositionally biased toward basic and acidic residues: residues 1464 to 1487 (GRQE…RELS) and 1502 to 1511 (DFTETREKQQ). Positions 1517–1530 (ESETADVSPNNVQV) are enriched in polar residues.

In terms of assembly, interacts with CLTC/clathrin heavy chain 1, AP2A2/AP-2 complex subunit alpha-2, and PIK3C2A/phosphatidylinositol 4-phosphate 3-kinase C2 domain-containing subunit alpha. Expressed in dopaminergic and serotoninergic neurons.

Its subcellular location is the cell projection. It is found in the cilium. It localises to the cytoplasm. In terms of biological role, component of the primary cilium that controls cilium formation and length. May function within retrograde intraflagellar transport (IFT)-associated pathways to remove signaling proteins from primary cilia. Also involved in neuronal vesicle biogenesis and neurotransmitter vesicular function. In Homo sapiens (Human), this protein is Glutamate-rich protein 3.